Reading from the N-terminus, the 647-residue chain is Threonine--tRNA ligase (647 aa).

The TGS domain maps to 1-63 (MYMIQLTFPD…EHDGKIELVM (63 aa)). The catalytic stretch occupies residues 247–544 (DHRKLGKELD…LIEEYKGAFP (298 aa)). Positions 340, 391, and 521 each coordinate Zn(2+).

It belongs to the class-II aminoacyl-tRNA synthetase family. Homodimer. Zn(2+) serves as cofactor.

The protein resides in the cytoplasm. The catalysed reaction is tRNA(Thr) + L-threonine + ATP = L-threonyl-tRNA(Thr) + AMP + diphosphate + H(+). In terms of biological role, catalyzes the attachment of threonine to tRNA(Thr) in a two-step reaction: L-threonine is first activated by ATP to form Thr-AMP and then transferred to the acceptor end of tRNA(Thr). Also edits incorrectly charged L-seryl-tRNA(Thr). The protein is Threonine--tRNA ligase of Exiguobacterium sp. (strain ATCC BAA-1283 / AT1b).